Here is a 1040-residue protein sequence, read N- to C-terminus: Multidrug resistance protein MdtB (1040 aa).

Transmembrane regions (helical) follow at residues phenylalanine 16–isoleucine 36, aspartate 342–leucine 362, isoleucine 369–leucine 389, leucine 396–isoleucine 416, isoleucine 440–phenylalanine 460, phenylalanine 472–proline 492, tryptophan 537–isoleucine 557, leucine 863–valine 883, phenylalanine 888–alanine 908, leucine 911–valine 931, isoleucine 968–valine 988, and isoleucine 998–isoleucine 1018.

This sequence belongs to the resistance-nodulation-cell division (RND) (TC 2.A.6) family. MdtB subfamily. In terms of assembly, part of a tripartite efflux system composed of MdtA, MdtB and MdtC. MdtB forms a heteromultimer with MdtC.

The protein resides in the cell inner membrane. This is Multidrug resistance protein MdtB from Klebsiella pneumoniae subsp. pneumoniae (strain ATCC 700721 / MGH 78578).